The following is an 89-amino-acid chain: Probable monothiol glutaredoxin GrlA (89 aa).

Residues 1-89 (MLYMKGTPKM…EPMLRDAVAA (89 aa)) enclose the Glutaredoxin domain. Residue Lys-5 coordinates glutathione. Cys-13 contributes to the [2Fe-2S] cluster binding site. Residues Arg-42, Phe-54, and 67–68 (SD) each bind glutathione.

The protein belongs to the glutaredoxin family. Monothiol subfamily.

This chain is Probable monothiol glutaredoxin GrlA (grlA), found in Legionella pneumophila subsp. pneumophila (strain Philadelphia 1 / ATCC 33152 / DSM 7513).